The sequence spans 515 residues: Iroquois-class homeodomain protein IRX-4 (515 aa).

A DNA-binding region (homeobox; TALE-type) is located at residues 144 to 205 (GTRRKNATRE…NARRRLKKEN (62 aa)). Disordered stretches follow at residues 205 to 258 (NKMT…ELEL), 278 to 307 (TPFQSLDSGPERIPASSDGPGTGKEASTTL), and 398 to 425 (GPTGVSATTPASSPAVTAPSGALDRHQD). Residues 214 to 223 (KCADEKRPYG) are compositionally biased toward basic and acidic residues. The segment covering 224-236 (EGEEEEAGEEESR) has biased composition (acidic residues). Positions 237–257 (EEPLKSAKSEGHAGKDDKELE) are enriched in basic and acidic residues. The span at 399–419 (PTGVSATTPASSPAVTAPSGA) shows a compositional bias: low complexity.

This sequence belongs to the TALE/IRO homeobox family. As to quaternary structure, interacts with the vitamin D receptor VDR but doesn't affect its transactivation activity. In terms of tissue distribution, expressed in the developing central nervous system, skin, and vibrissae, but predominantly expressed in the cardiac ventricles of the developing heart. Not expressed in the developing metanephric kidney or adult kidney.

The protein localises to the nucleus. Functionally, likely to be an important mediator of ventricular differentiation during cardiac development. The protein is Iroquois-class homeodomain protein IRX-4 (Irx4) of Mus musculus (Mouse).